The primary structure comprises 477 residues: Ribulose bisphosphate carboxylase large chain (477 aa).

Residues 1-2 (MS) constitute a propeptide that is removed on maturation. An N-acetylproline modification is found at Pro3. Lys14 bears the N6,N6,N6-trimethyllysine mark. Substrate contacts are provided by Asn123 and Thr173. Lys175 functions as the Proton acceptor in the catalytic mechanism. Residue Lys177 participates in substrate binding. 3 residues coordinate Mg(2+): Lys201, Asp203, and Glu204. Position 201 is an N6-carboxylysine (Lys201). The active-site Proton acceptor is His294. Arg295, His327, and Ser379 together coordinate substrate.

This sequence belongs to the RuBisCO large chain family. Type I subfamily. In terms of assembly, heterohexadecamer of 8 large chains and 8 small chains; disulfide-linked. The disulfide link is formed within the large subunit homodimers. Mg(2+) serves as cofactor. The disulfide bond which can form in the large chain dimeric partners within the hexadecamer appears to be associated with oxidative stress and protein turnover.

The protein resides in the plastid. It is found in the chloroplast. The catalysed reaction is 2 (2R)-3-phosphoglycerate + 2 H(+) = D-ribulose 1,5-bisphosphate + CO2 + H2O. It carries out the reaction D-ribulose 1,5-bisphosphate + O2 = 2-phosphoglycolate + (2R)-3-phosphoglycerate + 2 H(+). RuBisCO catalyzes two reactions: the carboxylation of D-ribulose 1,5-bisphosphate, the primary event in carbon dioxide fixation, as well as the oxidative fragmentation of the pentose substrate in the photorespiration process. Both reactions occur simultaneously and in competition at the same active site. This Carthamus tinctorius (Safflower) protein is Ribulose bisphosphate carboxylase large chain.